Consider the following 387-residue polypeptide: MATKKKTNFDDITKKYGAERDKALADALALIEKDFGKGSLMRLGEAANQKVSVVSSGSLALDIALGAGGYPKGRIVEIYGPESSGKTTVALHAVAAVQKEGGIAAFIDAENALDPEYAKALGVNIDELLLSQPDYGEQGLQIAEKLITSGAVDLVVIDSVAALVPKAEIDGEIGDSSVGLQARMMSQAMRKLAGHINKTKTTAIFINQLREKVGVMFGSPETTPGGRALKFYASVRLDVRGSTKIEEGSGDNKTQIGKITKIKVVKNKVAPPFKVALVDIMFGEGISSTGELLNIAVEEGIIKKSGAWFAYNDEKIGQGAEKAKNYLKEHQDVFDEIDHKVRAAHGLLDDSEVAETEEETTASKTKAKAKKEEKXVETEEIELELQD.

80–87 contributes to the ATP binding site; it reads GPESSGKT. The disordered stretch occupies residues 348–387; it reads LDDSEVAETEEETTASKTKAKAKKEEKXVETEEIELELQD. 2 stretches are compositionally biased toward acidic residues: residues 349 to 360 and 378 to 387; these read DDSEVAETEEET and TEEIELELQD.

This sequence belongs to the RecA family.

Its subcellular location is the cytoplasm. Functionally, can catalyze the hydrolysis of ATP in the presence of single-stranded DNA, the ATP-dependent uptake of single-stranded DNA by duplex DNA, and the ATP-dependent hybridization of homologous single-stranded DNAs. It interacts with LexA causing its activation and leading to its autocatalytic cleavage. This Lactococcus lactis subsp. cremoris (Streptococcus cremoris) protein is Protein RecA.